The following is an 802-amino-acid chain: Serine/threonine-protein kinase zyg-8 (802 aa).

Polar residues predominate over residues 1–13 (MPQTSAWQLNDTT). The disordered stretch occupies residues 1 to 102 (MPQTSAWQLN…SAPSTSSAHR (102 aa)). Pro residues predominate over residues 15-24 (RPPPPPPPPG). Low complexity predominate over residues 89–99 (SPSSSAPSTSS). Doublecortin domains lie at 211–298 (KRLR…VDYS) and 340–423 (RIIK…ADDL). Residues 430 to 470 (HKSVGSGTSSNMRRTSRRSTMPNRNESLRHDRSGSVIPDQD) are disordered. Low complexity predominate over residues 434–454 (GSGTSSNMRRTSRRSTMPNRN). The Protein kinase domain occupies 482–743 (FQLVRLIGDG…AGELLNDEWM (262 aa)). ATP contacts are provided by residues 488–496 (IGDGNTAVV) and Lys512. The Proton acceptor role is filled by Asp604.

The protein belongs to the protein kinase superfamily. CAMK Ser/Thr protein kinase family. CaMK subfamily. In terms of assembly, interacts with tac-1. In terms of tissue distribution, expressed in AFD thermosensory neurons. Expressed in cells near the nerve ring, in motor neurons in the ventral nerve cord and in the six touch receptor neurons including ALML/R, PLML/R and AVM and PVM. Expressed in hypodermal and neural tissues and in the germline.

Its subcellular location is the cytoplasm. The protein localises to the cytoskeleton. The protein resides in the microtubule organizing center. It localises to the centrosome. It is found in the spindle. The catalysed reaction is L-seryl-[protein] + ATP = O-phospho-L-seryl-[protein] + ADP + H(+). It catalyses the reaction L-threonyl-[protein] + ATP = O-phospho-L-threonyl-[protein] + ADP + H(+). Its function is as follows. Probable kinase. Kinase activity may be involved in positioning of spindle poles in meiosis and mitosis. Plays a role in spindle positioning during asymmetric division of one-cell stage embryos. Affects spindle position by promoting microtubule assembly during anaphase. Plays a role in the assembly and stability of oocyte spindle, perhaps balancing the forces in the spindle and maintaining their morphology during metaphase. Plays a role in cell division and in embryonic viability up until gastrulation. Required for neuronal morphology and polarity and restricting ectopic process outgrowth; probably as a result of a role in maintaining microtubule integrity. Involved in maintaining neuronal microtubule number, length and packing. May promote axonal and synaptic growth. Plays a role in regulating thermotaxis responses in AFD thermosensory neurons. Required for touch sensitivity in adult touch response receptor neurons. The polypeptide is Serine/threonine-protein kinase zyg-8 (Caenorhabditis elegans).